Consider the following 938-residue polypeptide: ATP-dependent 6-phosphofructokinase subunit beta (938 aa).

Residues 1–552 (MTQSLPLLNG…HLDNFMAINS (552 aa)) form an N-terminal catalytic PFK domain 1 region. ATP is bound by residues Gly-185, 249–250 (RC), and 279–282 (GDGS). Asp-280 is a binding site for Mg(2+). Beta-D-fructose 6-phosphate is bound by residues 325–327 (SID), Arg-362, 369–371 (MGR), Glu-426, Arg-454, and 460–463 (HVQR). Asp-327 (proton acceptor) is an active-site residue. The tract at residues 553 to 566 (ADHIEPKLPEHTHM) is interdomain linker. The tract at residues 567 to 938 (KIAIVNVGAP…ADHLVGRKKL (372 aa)) is C-terminal regulatory PFK domain 2. Residues Arg-637, 695 to 699 (TLSNN), Arg-733, 740 to 742 (QGG), Lys-826, 832 to 835 (HVQQ), and Arg-915 contribute to the beta-D-fructose 2,6-bisphosphate site.

The protein belongs to the phosphofructokinase type A (PFKA) family. ATP-dependent PFK group I subfamily. Eukaryotic two domain clade 'E' sub-subfamily. In terms of assembly, heterooctamer of 4 alpha and 4 beta chains. Requires Mg(2+) as cofactor.

The protein resides in the cytoplasm. It catalyses the reaction beta-D-fructose 6-phosphate + ATP = beta-D-fructose 1,6-bisphosphate + ADP + H(+). The protein operates within carbohydrate degradation; glycolysis; D-glyceraldehyde 3-phosphate and glycerone phosphate from D-glucose: step 3/4. Its activity is regulated as follows. Allosterically activated by ADP, AMP, or fructose 2,6-bisphosphate, and allosterically inhibited by ATP or citrate. Catalyzes the phosphorylation of D-fructose 6-phosphate to fructose 1,6-bisphosphate by ATP, the first committing step of glycolysis. This Kluyveromyces lactis (strain ATCC 8585 / CBS 2359 / DSM 70799 / NBRC 1267 / NRRL Y-1140 / WM37) (Yeast) protein is ATP-dependent 6-phosphofructokinase subunit beta (PFK2).